Reading from the N-terminus, the 512-residue chain is Bifunctional purine biosynthesis protein PurH (512 aa).

The region spanning 1 to 144 is the MGS-like domain; the sequence is MKRALVSVSD…KNYHDVTIVV (144 aa).

The protein belongs to the PurH family.

The enzyme catalyses (6R)-10-formyltetrahydrofolate + 5-amino-1-(5-phospho-beta-D-ribosyl)imidazole-4-carboxamide = 5-formamido-1-(5-phospho-D-ribosyl)imidazole-4-carboxamide + (6S)-5,6,7,8-tetrahydrofolate. It catalyses the reaction IMP + H2O = 5-formamido-1-(5-phospho-D-ribosyl)imidazole-4-carboxamide. The protein operates within purine metabolism; IMP biosynthesis via de novo pathway; 5-formamido-1-(5-phospho-D-ribosyl)imidazole-4-carboxamide from 5-amino-1-(5-phospho-D-ribosyl)imidazole-4-carboxamide (10-formyl THF route): step 1/1. It participates in purine metabolism; IMP biosynthesis via de novo pathway; IMP from 5-formamido-1-(5-phospho-D-ribosyl)imidazole-4-carboxamide: step 1/1. The polypeptide is Bifunctional purine biosynthesis protein PurH (Limosilactobacillus reuteri (strain DSM 20016) (Lactobacillus reuteri)).